The following is a 340-amino-acid chain: Cytosolic Fe-S cluster assembly factor NBP35 (340 aa).

[4Fe-4S] cluster-binding residues include Cys31, Cys45, Cys48, and Cys54. 84-91 is an ATP binding site; it reads GKGGVGKS. Cys257 and Cys260 together coordinate [4Fe-4S] cluster.

This sequence belongs to the Mrp/NBP35 ATP-binding proteins family. NUBP1/NBP35 subfamily. As to quaternary structure, heterotetramer of 2 NBP35 and 2 CFD1 chains. Requires [4Fe-4S] cluster as cofactor.

The protein resides in the cytoplasm. Component of the cytosolic iron-sulfur (Fe/S) protein assembly (CIA) machinery. Required for maturation of extramitochondrial Fe-S proteins. The NBP35-CFD1 heterotetramer forms a Fe-S scaffold complex, mediating the de novo assembly of an Fe-S cluster and its transfer to target apoproteins. In Phaeosphaeria nodorum (strain SN15 / ATCC MYA-4574 / FGSC 10173) (Glume blotch fungus), this protein is Cytosolic Fe-S cluster assembly factor NBP35.